The primary structure comprises 238 residues: Probable transcriptional regulatory protein SERP0322 (238 aa).

The protein belongs to the TACO1 family. YeeN subfamily.

The protein localises to the cytoplasm. This is Probable transcriptional regulatory protein SERP0322 from Staphylococcus epidermidis (strain ATCC 35984 / DSM 28319 / BCRC 17069 / CCUG 31568 / BM 3577 / RP62A).